A 152-amino-acid polypeptide reads, in one-letter code: NADH-ubiquinone oxidoreductase chain 4 (152 aa).

A run of 4 helical transmembrane segments spans residues 2-22, 43-63, 84-104, and 128-148; these read FSGATTLMIAHGLTSSMYFCL, ILLPLTAFWWLTASLTNLALP, ITIVLTGLNMLITALYSLHMF, and MLMFMHLAPIILLSLNPNIIL.

The protein belongs to the complex I subunit 4 family.

It is found in the mitochondrion membrane. It catalyses the reaction a ubiquinone + NADH + 5 H(+)(in) = a ubiquinol + NAD(+) + 4 H(+)(out). Core subunit of the mitochondrial membrane respiratory chain NADH dehydrogenase (Complex I) that is believed to belong to the minimal assembly required for catalysis. Complex I functions in the transfer of electrons from NADH to the respiratory chain. The immediate electron acceptor for the enzyme is believed to be ubiquinone. The sequence is that of NADH-ubiquinone oxidoreductase chain 4 (MT-ND4) from Macaca fascicularis (Crab-eating macaque).